Consider the following 365-residue polypeptide: PHD finger protein 6 (365 aa).

Ser-2 carries the N-acetylserine modification. Short sequence motifs (nuclear localization signal) lie at residues 13-16 (RQRK) and 129-133 (RKHKK). A C2HC pre-PHD-type 1 zinc finger spans residues 14-52 (QRKCGFCKSNRDKECGQLLISENQKVAAHHKCMLFSSAL). Residues 14–132 (QRKCGFCKSN…IYMVYCRKHK (119 aa)) form an extended PHD1 domain (ePHD1) region. The segment at 80–132 (LMCSLCHCPGATIGCDVKTCHRTYHYHCALHDKAQIREKPSQGIYMVYCRKHK) adopts a PHD-type 1 zinc-finger fold. A phosphoserine mark is found at Ser-138, Ser-145, and Ser-155. Residues 139–211 (EADLEESFNE…RSSPSDTRPK (73 aa)) form a disordered region. The Nucleolar localization signal signature appears at 157-169 (KSKKKSRKGRPRK). Residues 157–171 (KSKKKSRKGRPRKTN) show a composition bias toward basic residues. Residue Lys-173 forms a Glycyl lysine isopeptide (Lys-Gly) (interchain with G-Cter in SUMO2) linkage. Residues Ser-183 and Ser-199 each carry the phosphoserine modification. The C2HC pre-PHD-type 2 zinc-finger motif lies at 209 to 249 (RPKCGFCHVGEEENEARGKLHIFNAKKAAAHYKCMLFSSGT). The interval 209-330 (RPKCGFCHVG…IYKLYCKNHS (122 aa)) is extended PHD2 domain (ePHD2). Lys-227 is covalently cross-linked (Glycyl lysine isopeptide (Lys-Gly) (interchain with G-Cter in SUMO2)). The segment at 278–330 (MKCTLCSQPGATIGCEIKACVKTYHYHCGVQDKAKYIENMSRGIYKLYCKNHS) adopts a PHD-type 2 zinc-finger fold. Positions 330-365 (SGNDERDEEDEERESKSRGKVEIDQQQLTQQQLNGN) are disordered. Basic and acidic residues predominate over residues 342–352 (RESKSRGKVEI). Low complexity predominate over residues 354–365 (QQQLTQQQLNGN). Thr-358 is modified (phosphothreonine).

In terms of assembly, interacts with UBTF. Interacts with the NuRD complex component RBBP4 (via the nucleolar localization motif), the interaction mediates transcriptional repression activity.

The protein localises to the nucleus. It localises to the nucleolus. It is found in the chromosome. The protein resides in the centromere. Its subcellular location is the kinetochore. In terms of biological role, transcriptional regulator that associates with ribosomal RNA promoters and suppresses ribosomal RNA (rRNA) transcription. The chain is PHD finger protein 6 (PHF6) from Pongo abelii (Sumatran orangutan).